The sequence spans 59 residues: Lantipeptide Flvbeta.f (59 aa).

Positions 1-27 (MEKMNNIAGITPENELDEMFDDSVVGA) are cleaved as a propeptide — cleaved by FlvT. 2,3-didehydrobutyrine; by FlvM2 is present on residues Thr-31 and Thr-32. 2 consecutive cross-links (beta-methyllanthionine (Thr-Cys); by FlvM2) follow at residues 41–47 (TKNPQIC) and 53–56 (TVKC).

In terms of processing, contains DL-beta-methyllanthionine, when coepressed in E.coli with the flavecin synthetase FlvM2.

The protein localises to the secreted. Lanthionine-containing peptide that does probably not show antibacterial activity, since its analog [+7]Flvbeta.f does not show antibacterial activity against M.luteus. Also does not show antibiotic activity when tested with [Del2]Flvalpha.a, an analog of Flvalpha.a, which is encoded by the same operon than Flvbeta.f. The bactericidal activity of lantibiotics is based on depolarization of energized bacterial cytoplasmic membranes, initiated by the formation of aqueous transmembrane pores. The polypeptide is Lantipeptide Flvbeta.f (Ruminococcus flavefaciens).